Reading from the N-terminus, the 351-residue chain is MSTVVTIPRSVSWKGDAIAVLNQTKLPHSTEYKTLTTIEEVWKSIVMLEVRGAPAIGIVAAFGLALASKKYTTLHIEEFQKKFNRDCNYLGTSRPTAVNLFWAIDRMRESIQEITTIKEAQKILEEEALRIQQEDEAVCRSIGEHALTCFKDGDNILTICNAGSIATARYGTALAPFYIGKEKGVRLHAYACETRPVLQGGRLTTWELKQAGIDVTLITDNTAAHAIQTKEINAIIVGADRIVANGDTANKIGTMNLAILAKYFDIPFYVAAPLSTFDITKQTGAEIVIEERDETEVTKIFGKQVAPVGTTVYNPAFDVTPNKLITGIITEKGIICGDYKREIVSLFEKTS.

Residues 51–53, Arg94, and Gln199 contribute to the substrate site; that span reads RGA. Asp240 acts as the Proton donor in catalysis. 250 to 251 provides a ligand contact to substrate; it reads NK.

It belongs to the EIF-2B alpha/beta/delta subunits family. MtnA subfamily. As to quaternary structure, homodimer.

It carries out the reaction 5-(methylsulfanyl)-alpha-D-ribose 1-phosphate = 5-(methylsulfanyl)-D-ribulose 1-phosphate. It functions in the pathway amino-acid biosynthesis; L-methionine biosynthesis via salvage pathway; L-methionine from S-methyl-5-thio-alpha-D-ribose 1-phosphate: step 1/6. Its function is as follows. Catalyzes the interconversion of methylthioribose-1-phosphate (MTR-1-P) into methylthioribulose-1-phosphate (MTRu-1-P). The chain is Methylthioribose-1-phosphate isomerase from Bacillus thuringiensis subsp. konkukian (strain 97-27).